The following is an 82-amino-acid chain: uncharacterized protein (82 aa).

It is found in the plastid. Its subcellular location is the chloroplast. This is an uncharacterized protein from Vicia faba (Broad bean).